The sequence spans 466 residues: Trigger factor (466 aa).

In terms of domain architecture, PPIase FKBP-type spans 162–243; the sequence is GDVVSIDLSA…VRSVKERELP (82 aa). Residues 428–466 form a disordered region; it reads GNTIDTSEFFGKRVSAGEAEEAEPADEGAARAASDEATT. Residues 457–466 show a composition bias toward low complexity; that stretch reads ARAASDEATT.

It belongs to the FKBP-type PPIase family. Tig subfamily.

It is found in the cytoplasm. The catalysed reaction is [protein]-peptidylproline (omega=180) = [protein]-peptidylproline (omega=0). Its function is as follows. Involved in protein export. Acts as a chaperone by maintaining the newly synthesized protein in an open conformation. Functions as a peptidyl-prolyl cis-trans isomerase. The sequence is that of Trigger factor from Mycobacterium tuberculosis (strain ATCC 25177 / H37Ra).